The chain runs to 100 residues: Urease subunit gamma (100 aa).

Belongs to the urease gamma subunit family. As to quaternary structure, heterotrimer of UreA (gamma), UreB (beta) and UreC (alpha) subunits. Three heterotrimers associate to form the active enzyme.

The protein resides in the cytoplasm. It catalyses the reaction urea + 2 H2O + H(+) = hydrogencarbonate + 2 NH4(+). The protein operates within nitrogen metabolism; urea degradation; CO(2) and NH(3) from urea (urease route): step 1/1. The polypeptide is Urease subunit gamma (Opitutus terrae (strain DSM 11246 / JCM 15787 / PB90-1)).